The chain runs to 1450 residues: MISKRRRLDSEDKENLTEDASKTMPLSKLAKKSHNSHEVEENGSVFVKLLKASGLTLKTGENQNQLGVDQVIFQRKLFQALRKHPAYPKVIEEFVNGLESYTEDSESLRNCLLSCERLQDEEASMGTFYSKSLIKLLLGIDILQPAIIKMLFEKVPQFLFESENRDGINMARLIINQLKWLDRIVDGKDLTAQMMQLISVAPVNLQHDFITSLPEILGDSQHANVGKELGELLVQNTSLTVPILDVFSSLRLDPNFLSKIRQLVMGKLSSVRLEDFPVIVKFLLHSVTDTTSLEVIAELRENLNVQQFILPSRIQASQSKLKSKGLASSSGNQENSDKDCIVLVFDVIKSAIRYEKTISEAWFKAIERIESAAEHKALDVVMLLIIYSTSTQTKKGVEKLLRNKIQSDCIQEQLLDSAFSTHYLVLKDICPSILLLAQTLFHSQDQRIILFGSLLYKYAFKFFDTYCQQEVVGALVTHVCSGTEAEVDTALDVLLELIVLNASAMRLNAAFVKGILDYLENMSPQQIRKIFCILSTLAFSQQPGTSNHIQDDMHLVIRKQLSSTVFKYKLIGIIGAVTMAGIMAEDRSVPSNSSQRSANVSSEQRTQVTSLLQLVHSCTEHSPWASSLYYDEFANLIQERKLAPKTLEWVGQTIFNDFQDAFVVDFCAAPEGDFPFPVKALYGLEEYSTQDGIVINLLPLFYQECAKDASRATSQESSQRSMSSLCLASHFRLLRLCVARQHDGNLDEIDGLLDCPLFLPDLEPGEKLESMSAKDRSLMCSLTFLTFNWFREVVNAFCQQTSPEMKGKVLSRLKDLVELQGILEKYLAVIPDYVPPFASVDLDTLDMMPRSSSAVAAKNRNKGKTGGKKQKADSNKASCSDTLLTEDTSECDMAPSGRSHVDKESTGKEGKTFVSLQNYRAFFRELDIEVFSILHSGLVTKFILDTEMHTEATEVVQLGPAELLFLLEDLSQKLENMLTAPFAKRICCFKNKGRQNIGFSHLHQRSVQDIVHCVVQLLTPMCNHLENIHNFFQCLGAEHLSADDKARATAQEQHTMACCYQKLLQVLHALFAWKGFTHQSKHRLLHSALEVLSNRLKQMEQDQPLEELVSQSFSYLQNFHHSVPSFQCGLYLLRLLMALLEKSAVPNQKKEKLASLAKQLLCRAWPHGEKEKNPTFNDHLHDVLYIYLEHTDNVLKAIEEITGVGVPELVSAPKDAASSTFPTLTRHTFVIFFRVMMAELEKTVKGLQAGTAADSQQVHEEKLLYWNMAVRDFSILLNLMKVFDSYPVLHVCLKYGRRFVEAFLKQCMPLLDFSFRKHREDVLSLLQTLQLNTRLLHHLCGHSKIRQDTRLTKHVPLLKKSLELLVCRVKAMLVLNNCREAFWLGTLKNRDLQGEEIISQDPSSSESNAEDSEDGVTSHVSRNRATEDGEDEASDEQKDQDSDESDDSSS.

A disordered region spans residues 1–37 (MISKRRRLDSEDKENLTEDASKTMPLSKLAKKSHNSH). The tract at residues 1-289 (MISKRRRLDS…VKFLLHSVTD (289 aa)) is interaction with FANCE. Over residues 8 to 21 (LDSEDKENLTEDAS) the composition is skewed to basic and acidic residues. The residue at position 220 (Ser-220) is a Phosphoserine. Residues 246-357 (VFSSLRLDPN…IKSAIRYEKT (112 aa)) form an interaction with BRCA2 region. Lys-559 is covalently cross-linked (Glycyl lysine isopeptide (Lys-Gly) (interchain with G-Cter in ubiquitin)). Ser-714 bears the Phosphoserine mark. A disordered region spans residues 853–879 (SAVAAKNRNKGKTGGKKQKADSNKASC). Residues 859–869 (NRNKGKTGGKK) show a composition bias toward basic residues. Residues Ser-1255, Ser-1404, and Ser-1412 each carry the phosphoserine modification. The tract at residues 1398-1450 (ISQDPSSSESNAEDSEDGVTSHVSRNRATEDGEDEASDEQKDQDSDESDDSSS) is disordered. Thr-1426 is modified (phosphothreonine). Ser-1434 is subject to Phosphoserine. Residues 1441–1450 (DSDESDDSSS) are compositionally biased toward acidic residues.

This sequence belongs to the Fanconi anemia protein FANCD2 family. In terms of assembly, homodimer; cannot be ubiquitinated and does not bind DNA. Part of a FANCI-FANCD2 heterodimeric complex that binds and scans dsDNA for DNA damage. Interacts directly with FANCE and FANCI. Interacts with USP1 and MEN1. The ubiquitinated form specifically interacts with BRCA1 and BLM. Both the nonubiquitinated and the monoubiquitinated forms interact with BRCA2; this interaction is mediated by phosphorylated FANCG and the complex also includes XCCR3. The ubiquitinated form specifically interacts with MTMR15/FAN1 (via UBZ-type zinc finger), leading to recruit MTMR15/FAN1 to sites of DNA damage. Interacts with DCLRE1B/Apollo. Interacts with POLN. Interacts with UHRF1 and UHRF2; these interactions promote FANCD2 activation. In terms of processing, monoubiquitinated on Lys-559 during S phase and upon genotoxic stress by FANCL in complex with E2 ligases UBE2T or UBE2W. Deubiquitinated by USP1 as cells enter G2/M, or once DNA repair is completed. Monoubiquitination requires the joint intervention of the FANC core complex, including FANCA, FANCB, FANCC, FANCE, FANCF, FANCG, and FANCM, and proteins involved in cell cycle checkpoints and DNA repair, including RPA1, ATR, CHEK1 and BRCA1, and is mediated by FANCL/PHF9. Monoubiquitination prevents DNA release from the FANCI-FANCD2 complex. FANCD2 is only ubiquitinated in the FANCI-FANCD2 complex and the monoubiquitination of FANCD2 is promoted by phosphorylation of FANCI. Ubiquitination is required for binding to chromatin, interaction with BRCA1, BRCA2 and MTMR15/FAN1, DNA repair, and normal cell cycle progression. Post-translationally, phosphorylated on several sites including Ser-220 and Ser-1399 in response to genotoxic stress by ATM and/or ATR.

The protein resides in the nucleus. Functionally, required for maintenance of chromosomal stability. Promotes accurate and efficient pairing of homologs during meiosis. Involved in the repair of DNA double-strand breaks, both by homologous recombination and single-strand annealing. The FANCI-FANCD2 complex binds and scans double-stranded DNA (dsDNA) for DNA damage; this complex stalls at DNA junctions between double-stranded DNA and single-stranded DNA. May participate in S phase and G2 phase checkpoint activation upon DNA damage. Plays a role in preventing breakage and loss of missegregating chromatin at the end of cell division, particularly after replication stress. Promotes BRCA2/FANCD1 loading onto damaged chromatin. May also be involved in B-cell immunoglobulin isotype switching. The chain is Fanconi anemia group D2 protein homolog (Fancd2) from Mus musculus (Mouse).